Here is a 384-residue protein sequence, read N- to C-terminus: Flap endonuclease 1 (384 aa).

The interval 1–105 (MGVKGLNQLI…GELEKRLLKR (105 aa)) is N-domain. D34 contributes to the Mg(2+) binding site. 2 residues coordinate DNA: R47 and R71. Residues D87, E159, E161, D180, and D182 each coordinate Mg(2+). Positions 123–254 (DMTKYQKRLV…VTAYKLIKEH (132 aa)) are I-domain. A DNA-binding site is contributed by E159. G232 and D234 together coordinate DNA. Position 234 (D234) interacts with Mg(2+). An interaction with PCNA region spans residues 341–349 (IQGRLDGFF). Residues 354-384 (KYSNTSPLGKDDKKRKTNDKKGAAAKKTKRR) form a disordered region. The span at 362–375 (GKDDKKRKTNDKKG) shows a compositional bias: basic and acidic residues.

It belongs to the XPG/RAD2 endonuclease family. FEN1 subfamily. Interacts with PCNA. Three molecules of FEN1 bind to one PCNA trimer with each molecule binding to one PCNA monomer. PCNA stimulates the nuclease activity without altering cleavage specificity. Mg(2+) is required as a cofactor. Phosphorylated. Phosphorylation upon DNA damage induces relocalization to the nuclear plasma.

The protein localises to the nucleus. Its subcellular location is the nucleolus. It is found in the nucleoplasm. It localises to the mitochondrion. In terms of biological role, structure-specific nuclease with 5'-flap endonuclease and 5'-3' exonuclease activities involved in DNA replication and repair. During DNA replication, cleaves the 5'-overhanging flap structure that is generated by displacement synthesis when DNA polymerase encounters the 5'-end of a downstream Okazaki fragment. It enters the flap from the 5'-end and then tracks to cleave the flap base, leaving a nick for ligation. Also involved in the long patch base excision repair (LP-BER) pathway, by cleaving within the apurinic/apyrimidinic (AP) site-terminated flap. Acts as a genome stabilization factor that prevents flaps from equilibrating into structures that lead to duplications and deletions. Also possesses 5'-3' exonuclease activity on nicked or gapped double-stranded DNA, and exhibits RNase H activity. Also involved in replication and repair of rDNA and in repairing mitochondrial DNA. The chain is Flap endonuclease 1 from Lodderomyces elongisporus (strain ATCC 11503 / CBS 2605 / JCM 1781 / NBRC 1676 / NRRL YB-4239) (Yeast).